The sequence spans 485 residues: NADH-quinone oxidoreductase subunit N (485 aa).

14 consecutive transmembrane segments (helical) span residues 8–28 (LIALLPLLIVGLTVVVVMLSI), 35–55 (FLNATLSVIGLNAALVSLWFV), 71–91 (GFAMLYTGLVLLASLATCTFA), 105–125 (FYLLVLIAALGGILLANANHL), 127–147 (SLFLGIELISLPLFGLVGYAF), 159–179 (YTILSAAASSFLLFGMALVYA), 203–223 (LLAGFGMMIVGLGFKLSLVPF), 235–255 (PAPVSTFLATASKIAIFGVVM), 271–291 (VVLAIIAFASIIFGNLMALSQ), 297–317 (LLGYSSISHLGYLLVALIALQ), 326–346 (VGGYLAGYLFSSLGAFGVVSL), 373–393 (AAVMTVMMLSLAGIPMTLGFI), 408–430 (WWLVGAVVVGSAIGLYYYLRVAV), and 455–475 (IVVLISALLVLVLGVWPQPLI).

It belongs to the complex I subunit 2 family. NDH-1 is composed of 13 different subunits. Subunits NuoA, H, J, K, L, M, N constitute the membrane sector of the complex.

The protein resides in the cell inner membrane. It carries out the reaction a quinone + NADH + 5 H(+)(in) = a quinol + NAD(+) + 4 H(+)(out). NDH-1 shuttles electrons from NADH, via FMN and iron-sulfur (Fe-S) centers, to quinones in the respiratory chain. The immediate electron acceptor for the enzyme in this species is believed to be ubiquinone. Couples the redox reaction to proton translocation (for every two electrons transferred, four hydrogen ions are translocated across the cytoplasmic membrane), and thus conserves the redox energy in a proton gradient. This Shigella boydii serotype 18 (strain CDC 3083-94 / BS512) protein is NADH-quinone oxidoreductase subunit N.